A 162-amino-acid chain; its full sequence is Protein NrdI (162 aa).

The protein belongs to the NrdI family.

Its function is as follows. Probably involved in ribonucleotide reductase function. This Streptococcus pyogenes serotype M28 (strain MGAS6180) protein is Protein NrdI.